The primary structure comprises 239 residues: Ribosomal RNA small subunit methyltransferase G (239 aa).

S-adenosyl-L-methionine-binding positions include G78, F83, 129–130 (AE), and R148.

The protein belongs to the methyltransferase superfamily. RNA methyltransferase RsmG family.

Its subcellular location is the cytoplasm. Its function is as follows. Specifically methylates the N7 position of a guanine in 16S rRNA. The protein is Ribosomal RNA small subunit methyltransferase G of Clostridium botulinum (strain Alaska E43 / Type E3).